Reading from the N-terminus, the 331-residue chain is 5,10-methylenetetrahydromethanopterin reductase (331 aa).

Belongs to the mer family.

It localises to the cytoplasm. The enzyme catalyses 5-methyl-5,6,7,8-tetrahydromethanopterin + oxidized coenzyme F420-(gamma-L-Glu)(n) + H(+) = 5,10-methylenetetrahydromethanopterin + reduced coenzyme F420-(gamma-L-Glu)(n). It functions in the pathway one-carbon metabolism; methanogenesis from CO(2); methyl-coenzyme M from 5,10-methylene-5,6,7,8-tetrahydromethanopterin: step 1/2. In terms of biological role, catalyzes the reversible reduction of methylene-H(4)MPT to methyl-H(4)MPT. This Methanocaldococcus jannaschii (strain ATCC 43067 / DSM 2661 / JAL-1 / JCM 10045 / NBRC 100440) (Methanococcus jannaschii) protein is 5,10-methylenetetrahydromethanopterin reductase.